The chain runs to 719 residues: Fatty acid oxidation complex subunit alpha (719 aa).

The enoyl-CoA hydratase/isomerase stretch occupies residues 1–190 (MVYQGNRITV…KLGLVDATVA (190 aa)). Aspartate 298 lines the substrate pocket. Positions 313-719 (HEINEAAVLG…AAGETFYATA (407 aa)) are 3-hydroxyacyl-CoA dehydrogenase. NAD(+) is bound by residues methionine 326, aspartate 345, 402 to 404 (VVE), lysine 409, and serine 431. Histidine 452 acts as the For 3-hydroxyacyl-CoA dehydrogenase activity in catalysis. Asparagine 455 lines the NAD(+) pocket. Asparagine 502 is a substrate binding site.

It in the N-terminal section; belongs to the enoyl-CoA hydratase/isomerase family. In the C-terminal section; belongs to the 3-hydroxyacyl-CoA dehydrogenase family. As to quaternary structure, heterotetramer of two alpha chains (FadB) and two beta chains (FadA).

It catalyses the reaction a (3S)-3-hydroxyacyl-CoA + NAD(+) = a 3-oxoacyl-CoA + NADH + H(+). The catalysed reaction is a (3S)-3-hydroxyacyl-CoA = a (2E)-enoyl-CoA + H2O. The enzyme catalyses a 4-saturated-(3S)-3-hydroxyacyl-CoA = a (3E)-enoyl-CoA + H2O. It carries out the reaction (3S)-3-hydroxybutanoyl-CoA = (3R)-3-hydroxybutanoyl-CoA. It catalyses the reaction a (3Z)-enoyl-CoA = a 4-saturated (2E)-enoyl-CoA. The catalysed reaction is a (3E)-enoyl-CoA = a 4-saturated (2E)-enoyl-CoA. The protein operates within lipid metabolism; fatty acid beta-oxidation. Functionally, involved in the aerobic and anaerobic degradation of long-chain fatty acids via beta-oxidation cycle. Catalyzes the formation of 3-oxoacyl-CoA from enoyl-CoA via L-3-hydroxyacyl-CoA. It can also use D-3-hydroxyacyl-CoA and cis-3-enoyl-CoA as substrate. The protein is Fatty acid oxidation complex subunit alpha of Psychrobacter arcticus (strain DSM 17307 / VKM B-2377 / 273-4).